A 356-amino-acid chain; its full sequence is UDP-N-acetylglucosamine--N-acetylmuramyl-(pentapeptide) pyrophosphoryl-undecaprenol N-acetylglucosamine transferase (356 aa).

Residues Ser195 and Gln287 each contribute to the UDP-N-acetyl-alpha-D-glucosamine site.

It belongs to the glycosyltransferase 28 family. MurG subfamily.

It localises to the cell membrane. The enzyme catalyses Mur2Ac(oyl-L-Ala-gamma-D-Glu-L-Lys-D-Ala-D-Ala)-di-trans,octa-cis-undecaprenyl diphosphate + UDP-N-acetyl-alpha-D-glucosamine = beta-D-GlcNAc-(1-&gt;4)-Mur2Ac(oyl-L-Ala-gamma-D-Glu-L-Lys-D-Ala-D-Ala)-di-trans,octa-cis-undecaprenyl diphosphate + UDP + H(+). Its pathway is cell wall biogenesis; peptidoglycan biosynthesis. Functionally, cell wall formation. Catalyzes the transfer of a GlcNAc subunit on undecaprenyl-pyrophosphoryl-MurNAc-pentapeptide (lipid intermediate I) to form undecaprenyl-pyrophosphoryl-MurNAc-(pentapeptide)GlcNAc (lipid intermediate II). The protein is UDP-N-acetylglucosamine--N-acetylmuramyl-(pentapeptide) pyrophosphoryl-undecaprenol N-acetylglucosamine transferase of Streptococcus gordonii (strain Challis / ATCC 35105 / BCRC 15272 / CH1 / DL1 / V288).